Here is a 1297-residue protein sequence, read N- to C-terminus: Protein Atossa (1297 aa).

2 disordered regions span residues Met-1–Ala-22 and Thr-117–Arg-149. Low complexity predominate over residues Gly-133–Ser-144. Residues Val-174–Asn-182 form a transactivation domain 1 (TAD1) region. Disordered stretches follow at residues Ser-206 to Asp-227, Thr-287 to Pro-311, Gly-518 to Ser-655, Ser-704 to Asp-741, and Ala-1017 to Ser-1048. Composition is skewed to low complexity over residues Asn-213–Ser-226 and Thr-287–Ser-305. Positions Ser-564–Asp-578 are enriched in polar residues. Basic residues predominate over residues Gln-605–Arg-620. Composition is skewed to low complexity over residues Ser-643–Ser-655 and Gly-706–Thr-716. A compositionally biased stretch (acidic residues) spans Asp-717 to Glu-731. A required for macropage invasion region spans residues Leu-1074–Leu-1132. Residues Val-1150–Ile-1158 form a transactivation domain 2 (TAD2) region. Positions Ser-1192–Lys-1213 are disordered. Residues Arg-1203–Ser-1212 show a composition bias toward low complexity.

The protein belongs to the ATOS family. Expressed in macrophages.

It is found in the nucleus. Functionally, transcription regulator that synchronizes transcriptional and translational programs to promote macrophage invasion of tissues. Required in macrophages for their early invasion into the extended germband. Induces transcriptional expression of metabolic enzymes as well as of the translational regulator pths/DDX47. With pths/DDX47, adjusts transcription and translation of a subset of OXPHOS genes to increase mitochondrial bioenergetics and allow macrophage tissue invasion. In Drosophila melanogaster (Fruit fly), this protein is Protein Atossa.